The sequence spans 90 residues: Small ribosomal subunit protein uS15 (90 aa).

Belongs to the universal ribosomal protein uS15 family. Part of the 30S ribosomal subunit. Forms a bridge to the 50S subunit in the 70S ribosome, contacting the 23S rRNA.

One of the primary rRNA binding proteins, it binds directly to 16S rRNA where it helps nucleate assembly of the platform of the 30S subunit by binding and bridging several RNA helices of the 16S rRNA. Functionally, forms an intersubunit bridge (bridge B4) with the 23S rRNA of the 50S subunit in the ribosome. The polypeptide is Small ribosomal subunit protein uS15 (Paraburkholderia xenovorans (strain LB400)).